Reading from the N-terminus, the 180-residue chain is MEYKTPFIAKKLGVSPKAVVRIAQQLNLTIEKNKYGHFIFTQEDVDQMLEHHRFQIEQSQNSQSTQKASSNEVEELKTQVNTIVQNISSNDFEQLANQLNTITRRLDRMEEQMQDKANDVVTYQLLQHRREMEEMLERIQKLEAALTKEEPIYITPDSKPTYEREKKPKRRKMIFSIFGL.

The H-T-H motif DNA-binding region spans Thr-5–Gln-25. A coiled-coil region spans residues Lys-67–Pro-151.

The protein belongs to the RacA family.

The protein localises to the cytoplasm. Its function is as follows. Required for the formation of axial filaments and for anchoring the origin regions at the cell poles in sporulating cells, thus ensuring proper chromosome segregation in the prespore. Binds in a dispersed manner throughout the chromosome but preferentially to sites clustered in the origin portion of the chromosome, causing condensation of the chromosome and its remodeling into an elongated, anchored structure. This Bacillus cereus (strain B4264) protein is Chromosome-anchoring protein RacA.